Here is a 501-residue protein sequence, read N- to C-terminus: Ammonium transporter 2 member 2 (501 aa).

Helical transmembrane passes span 35-55 (VAAT…YGSI), 64-84 (SAFM…LVGF), 140-160 (LVLF…GSLL), 174-194 (LWLL…GFLY), 203-223 (GGYV…YWVG), 238-258 (ILLM…FNGG), 274-294 (TNVS…IFFG), 298-318 (VIGA…GAGL), 322-342 (WSAM…MMIL), 356-376 (LAVF…TGLL), and 412-432 (FVTV…GLFI).

The protein belongs to the ammonia transporter channel (TC 1.A.11.2) family.

It is found in the membrane. Its function is as follows. Involved in ammonium transport. This is Ammonium transporter 2 member 2 (AMT2-2) from Oryza sativa subsp. japonica (Rice).